The primary structure comprises 226 residues: Glutathione peroxidase 3 (226 aa).

The first 24 residues, 1-24, serve as a signal peptide directing secretion; sequence MARLLQASCLLSLLLAGFVPQSRG. The active site involves Sec73. Residue Sec73 is a non-standard amino acid, selenocysteine.

This sequence belongs to the glutathione peroxidase family. As to quaternary structure, homotetramer. As to expression, secreted in plasma.

The protein resides in the secreted. It catalyses the reaction 2 glutathione + H2O2 = glutathione disulfide + 2 H2O. The catalysed reaction is tert-butyl hydroperoxide + 2 glutathione = tert-butanol + glutathione disulfide + H2O. Functionally, protects cells and enzymes from oxidative damage, by catalyzing the reduction of hydrogen peroxide, lipid peroxides and organic hydroperoxide, by glutathione. This Pongo pygmaeus (Bornean orangutan) protein is Glutathione peroxidase 3.